We begin with the raw amino-acid sequence, 82 residues long: Small ribosomal subunit protein uS17 (82 aa).

Belongs to the universal ribosomal protein uS17 family. As to quaternary structure, part of the 30S ribosomal subunit.

One of the primary rRNA binding proteins, it binds specifically to the 5'-end of 16S ribosomal RNA. The protein is Small ribosomal subunit protein uS17 of Rhodopseudomonas palustris (strain TIE-1).